We begin with the raw amino-acid sequence, 316 residues long: Fe-S cluster assembly protein dre2 (316 aa).

The N-terminal SAM-like domain stretch occupies residues 1 to 128 (MAPRCLLIGT…KPEQEEPVSI (128 aa)). The interval 129–208 (PLKFGKNKAN…EDDLITEADM (80 aa)) is linker. The tract at residues 141 to 177 (SATNGTNGAVNPDGSVPLNLNRKRDQPEPVKPAGVGF) is disordered. Residues C218, C229, C232, and C234 each contribute to the [2Fe-2S] cluster site. The fe-S binding site A stretch occupies residues 218–234 (CQPKPGKRRRACKDCTC). 4 residues coordinate [4Fe-4S] cluster: C279, C282, C290, and C293. 2 short sequence motifs (cx2C motif) span residues 279 to 282 (CGNC) and 290 to 293 (CDGC). Positions 279–293 (CGNCALGDAFRCDGC) are fe-S binding site B.

The protein belongs to the anamorsin family. In terms of assembly, monomer. Interacts with TAH18. Interacts with MIA40. [2Fe-2S] cluster serves as cofactor. It depends on [4Fe-4S] cluster as a cofactor.

The protein localises to the cytoplasm. Its subcellular location is the mitochondrion intermembrane space. Functionally, component of the cytosolic iron-sulfur (Fe-S) protein assembly (CIA) machinery required for the maturation of extramitochondrial Fe-S proteins. Part of an electron transfer chain functioning in an early step of cytosolic Fe-S biogenesis, facilitating the de novo assembly of a [4Fe-4S] cluster on the scaffold complex CFD1-NBP35. Electrons are transferred to DRE2 from NADPH via the FAD- and FMN-containing protein TAH18. TAH18-DRE2 are also required for the assembly of the diferric tyrosyl radical cofactor of ribonucleotide reductase (RNR), probably by providing electrons for reduction during radical cofactor maturation in the catalytic small subunit RNR2. The chain is Fe-S cluster assembly protein dre2 from Pyrenophora tritici-repentis (strain Pt-1C-BFP) (Wheat tan spot fungus).